The primary structure comprises 381 residues: Guanine nucleotide-binding protein G(olf) subunit alpha (381 aa).

The interval 1–25 is disordered; the sequence is MGCLGGNSKTTEDQGVDEKERREAN. The N-palmitoyl glycine moiety is linked to residue Gly-2. Cys-3 is lipidated: S-palmitoyl cysteine. Basic and acidic residues predominate over residues 10–25; that stretch reads TTEDQGVDEKERREAN. One can recognise a G-alpha domain in the interval 41–381; sequence ATHRLLLLGA…RMHLKQYELL (341 aa). Residues 44–57 form a G1 motif region; the sequence is RLLLLGAGESGKST. Residues Glu-52, Ser-53, Gly-54, Lys-55, Ser-56, and Thr-57 each contribute to the GTP site. Residue Ser-56 participates in Mg(2+) binding. Thr-178 carries the post-translational modification Phosphothreonine. A G2 motif region spans residues 183–191; sequence DLLRCRVLT. Leu-185 and Arg-186 together coordinate GTP. An ADP-ribosylarginine; by cholera toxin modification is found at Arg-188. Thr-191 is a binding site for GTP. Thr-191 and Asp-210 together coordinate Mg(2+). The tract at residues 206–215 is G3 motif; sequence FHMFDVGGQR. Positions 213, 279, 280, 282, and 353 each coordinate GTP. Residues 275–282 are G4 motif; it reads ILFLNKQD. The interval 351–356 is G5 motif; it reads TCAVDT.

It belongs to the G-alpha family. G(s) subfamily. In terms of assembly, g proteins are composed of 3 units; alpha, beta and gamma. The alpha chain contains the guanine nucleotide binding site. Interacts with GAS2L2. Interacts (GDP-bound form) with RIC8B (via C-terminus); promoting GNAL folding and association with the plasma membrane. Detected in olfactory neuroepithelium, brain, testis, and to a lower extent in retina, lung alveoli, spleen. Trace amounts where seen in kidney, adrenal gland and liver. Found to be expressed in all the insulinomas examined.

Its subcellular location is the cell membrane. It catalyses the reaction GTP + H2O = GDP + phosphate + H(+). Guanine nucleotide-binding protein (G protein) involved as transducer in olfactory signal transduction controlled by G protein-coupled receptors (GPCRs). Contains the guanine nucleotide binding site and alternates between an active, GTP-bound state and an inactive, GDP-bound state. Signaling by an activated GPCR promotes GDP release and GTP binding. The alpha subunit has a low GTPase activity that converts bound GTP to GDP, thereby terminating the signal. Both GDP release and GTP hydrolysis are modulated by numerous regulatory proteins. GNAL/G(olf) alpha specifically mediates olfactory signal transduction within the olfactory neuroepithelium and the basal ganglia following GPCRs activation. Acts by promoting the specific activation of adenylyl cyclase ADCY3, resulting in increased levels of the signaling molecule cAMP. This Homo sapiens (Human) protein is Guanine nucleotide-binding protein G(olf) subunit alpha.